Here is an 875-residue protein sequence, read N- to C-terminus: Alanine--tRNA ligase (875 aa).

Zn(2+) contacts are provided by His567, His571, Cys669, and His673.

The protein belongs to the class-II aminoacyl-tRNA synthetase family. It depends on Zn(2+) as a cofactor.

The protein resides in the cytoplasm. The catalysed reaction is tRNA(Ala) + L-alanine + ATP = L-alanyl-tRNA(Ala) + AMP + diphosphate. Catalyzes the attachment of alanine to tRNA(Ala) in a two-step reaction: alanine is first activated by ATP to form Ala-AMP and then transferred to the acceptor end of tRNA(Ala). Also edits incorrectly charged Ser-tRNA(Ala) and Gly-tRNA(Ala) via its editing domain. In Geobacter sulfurreducens (strain ATCC 51573 / DSM 12127 / PCA), this protein is Alanine--tRNA ligase.